We begin with the raw amino-acid sequence, 466 residues long: Argininosuccinate lyase (466 aa).

The protein belongs to the lyase 1 family. Argininosuccinate lyase subfamily.

The protein resides in the cytoplasm. It carries out the reaction 2-(N(omega)-L-arginino)succinate = fumarate + L-arginine. It functions in the pathway amino-acid biosynthesis; L-arginine biosynthesis; L-arginine from L-ornithine and carbamoyl phosphate: step 3/3. The sequence is that of Argininosuccinate lyase from Desulfovibrio desulfuricans (strain ATCC 27774 / DSM 6949 / MB).